Consider the following 1319-residue polypeptide: Girdin homolog (1319 aa).

The Calponin-homology (CH) domain occupies 6–118; it reads ENWSHPLAFW…KLLLLLLGCA (113 aa). 3 coiled-coil regions span residues 141-173, 218-690, and 732-1096; these read ELAA…TDEV, TSEL…ADLI, and KRER…KKST. The tract at residues 166–222 is disordered; sequence KMKETDEVGGGGGSIEDVDSDDMESSTTSSSNGEIAIKQQDQSFLMSRSTSPTSELR. Residues 204–222 show a composition bias toward polar residues; that stretch reads QQDQSFLMSRSTSPTSELR. Disordered regions lie at residues 1112-1236 and 1289-1308; these read INRR…SPAH and NVNL…LKPN. Polar residues predominate over residues 1118–1131; sequence TSNGGSTTEDSSVY.

Belongs to the CCDC88 family. As to expression, expressed in AQR and PQR gas-sensing neurons in hermaphrodites (at protein level).

Its subcellular location is the cytoplasm. It localises to the cytoskeleton. It is found in the cilium basal body. The protein resides in the microtubule organizing center. The protein localises to the centrosome. Its subcellular location is the centriole. Its function is as follows. Scaffolding protein that plays a role in ciliogenesis, cilium positioning and dendrite anchoring in sensory amphid neurons including AWB, AWA, AWC, ADL and ASI, the phasmid neurons PHA and PHB and the gas sensing neurons AQR, PQR, URX and BAG. Its role in cilium positioning may be through regulation of the localization of cell adhesion proteins such as the apical junction protein ajm-1, and the ciliary scaffolding protein Rootletin/che-10. Plays a more prominent role in regulating dendrite morphogenesis in AQR than in PQR neurons. Regulates localization of hmr-1 to the distal AQR dendrite. During embryonic elongation, required for the anchoring of URX and BAG dendrites to the presumptive nose. The sequence is that of Girdin homolog from Caenorhabditis elegans.